The following is a 324-amino-acid chain: Glutathione synthetase (324 aa).

The region spanning 129–313 is the ATP-grasp domain; sequence KLYALHFPDL…LEDEIVDWLV (185 aa). An ATP-binding site is contributed by 155–211; it reads VDIHGRAVIKPLDGKGGEGIFLLARADRNLNAIIEASTAYGTRHVMVQRYLEESRQG. Residues glutamate 284 and asparagine 286 each coordinate Mg(2+).

It belongs to the prokaryotic GSH synthase family. It depends on Mg(2+) as a cofactor. Mn(2+) serves as cofactor.

The enzyme catalyses gamma-L-glutamyl-L-cysteine + glycine + ATP = glutathione + ADP + phosphate + H(+). It participates in sulfur metabolism; glutathione biosynthesis; glutathione from L-cysteine and L-glutamate: step 2/2. This is Glutathione synthetase from Gloeobacter violaceus (strain ATCC 29082 / PCC 7421).